A 289-amino-acid polypeptide reads, in one-letter code: tRNA-cytidine(32) 2-sulfurtransferase (289 aa).

Residues 49 to 54 (SGGKDS) carry the PP-loop motif motif. 3 residues coordinate [4Fe-4S] cluster: Cys-124, Cys-127, and Cys-215.

This sequence belongs to the TtcA family. Homodimer. Mg(2+) serves as cofactor. [4Fe-4S] cluster is required as a cofactor.

The protein resides in the cytoplasm. It carries out the reaction cytidine(32) in tRNA + S-sulfanyl-L-cysteinyl-[cysteine desulfurase] + AH2 + ATP = 2-thiocytidine(32) in tRNA + L-cysteinyl-[cysteine desulfurase] + A + AMP + diphosphate + H(+). Its pathway is tRNA modification. Catalyzes the ATP-dependent 2-thiolation of cytidine in position 32 of tRNA, to form 2-thiocytidine (s(2)C32). The sulfur atoms are provided by the cysteine/cysteine desulfurase (IscS) system. The sequence is that of tRNA-cytidine(32) 2-sulfurtransferase from Methylococcus capsulatus (strain ATCC 33009 / NCIMB 11132 / Bath).